The sequence spans 150 residues: Deoxyuridine 5'-triphosphate nucleotidohydrolase (150 aa).

Residues 69-71 (RSG), Asn82, 86-88 (LID), and Lys96 each bind substrate.

It belongs to the dUTPase family. Mg(2+) serves as cofactor.

It carries out the reaction dUTP + H2O = dUMP + diphosphate + H(+). It participates in pyrimidine metabolism; dUMP biosynthesis; dUMP from dCTP (dUTP route): step 2/2. In terms of biological role, this enzyme is involved in nucleotide metabolism: it produces dUMP, the immediate precursor of thymidine nucleotides and it decreases the intracellular concentration of dUTP so that uracil cannot be incorporated into DNA. The protein is Deoxyuridine 5'-triphosphate nucleotidohydrolase of Neisseria meningitidis serogroup B (strain ATCC BAA-335 / MC58).